Here is a 30-residue protein sequence, read N- to C-terminus: Ornithine carbamoyltransferase, catabolic (30 aa).

Belongs to the aspartate/ornithine carbamoyltransferase superfamily. OTCase family.

Its subcellular location is the cytoplasm. It carries out the reaction carbamoyl phosphate + L-ornithine = L-citrulline + phosphate + H(+). It functions in the pathway amino-acid degradation; L-arginine degradation via ADI pathway; carbamoyl phosphate from L-arginine: step 2/2. This is Ornithine carbamoyltransferase, catabolic (arcB) from Aeromonas caviae (Aeromonas punctata).